The sequence spans 356 residues: sn-glycerol-3-phosphate import ATP-binding protein UgpC (356 aa).

An ABC transporter domain is found at 4-235 (LKLQAVTKSW…PASLFVASFI (232 aa)). 37–44 (GPSGCGKS) is a binding site for ATP.

The protein belongs to the ABC transporter superfamily. sn-glycerol-3-phosphate importer (TC 3.A.1.1.3) family. As to quaternary structure, the complex is composed of two ATP-binding proteins (UgpC), two transmembrane proteins (UgpA and UgpE) and a solute-binding protein (UgpB).

It localises to the cell inner membrane. It carries out the reaction sn-glycerol 3-phosphate(out) + ATP + H2O = sn-glycerol 3-phosphate(in) + ADP + phosphate + H(+). The enzyme catalyses glycerol 2-phosphate(out) + ATP + H2O = glycerol 2-phosphate(in) + ADP + phosphate + H(+). Its activity is regulated as follows. ATPase activity is stimulated when UgpB is bound to G3P. Transport is inhibited in vivo by increasing levels of internal phosphate. However, ATPase activity in proteoliposomes is neither inhibited by phosphate nor by the signal transducing protein PhoU or the phosphodiesterase UgpQ. Activated by gluconate and inhibited by fumarate. In terms of biological role, part of the ABC transporter complex UgpBAEC involved in sn-glycerol-3-phosphate (G3P) import. Responsible for energy coupling to the transport system. Can also transport glycerophosphoryl diesters, which are hydrolyzed to G3P and alcohol during transport. The G3P moiety can be detected in the cytoplasm whereas the corresponding alcohol is usually found in the culture medium. It was proposed by Yang et al that the complex could also transport glycerol-2-phosphate (G2P) in vivo, but it was shown later by Wuttge et al that UgpB does not bind G2P, questioning this transport activity. G2P might be converted in the periplasm to G3P before its transport. The polypeptide is sn-glycerol-3-phosphate import ATP-binding protein UgpC (Escherichia coli (strain K12)).